The chain runs to 274 residues: 2,3,4,5-tetrahydropyridine-2,6-dicarboxylate N-succinyltransferase (274 aa).

Residues Arg104 and Asp141 each contribute to the substrate site.

The protein belongs to the transferase hexapeptide repeat family. As to quaternary structure, homotrimer.

The protein resides in the cytoplasm. The catalysed reaction is (S)-2,3,4,5-tetrahydrodipicolinate + succinyl-CoA + H2O = (S)-2-succinylamino-6-oxoheptanedioate + CoA. It functions in the pathway amino-acid biosynthesis; L-lysine biosynthesis via DAP pathway; LL-2,6-diaminopimelate from (S)-tetrahydrodipicolinate (succinylase route): step 1/3. The polypeptide is 2,3,4,5-tetrahydropyridine-2,6-dicarboxylate N-succinyltransferase (Shewanella pealeana (strain ATCC 700345 / ANG-SQ1)).